A 383-amino-acid chain; its full sequence is Sulfate adenylyltransferase (383 aa).

It belongs to the sulfate adenylyltransferase family.

It catalyses the reaction sulfate + ATP + H(+) = adenosine 5'-phosphosulfate + diphosphate. Its pathway is sulfur metabolism; hydrogen sulfide biosynthesis; sulfite from sulfate: step 1/3. The sequence is that of Sulfate adenylyltransferase (sat) from Aeropyrum pernix (strain ATCC 700893 / DSM 11879 / JCM 9820 / NBRC 100138 / K1).